The primary structure comprises 1036 residues: MRRKTEIYSVELNGTKDVKPADQRDDKKFKGAKNKDLEPNKSHEKEELKKELDLDDHRLSNTELEQKYGTNIIQGLSSVRATELLARDGPNTLTPPKQTPEIIKFLKQMVGGFSILLWIGAALCWIAFVIQYVNNSASLDNVYLGAILVLVVILTGIFAYYQEAKSTNIMASFSKMIPQQALVIRDAEKKVISAEQLVVGDVVEIKGGDQIPADIRLVFSQGCKVDNSSLTGESEPQARSTEFTHENPLETKNIGFYSTTCLEGTATGIVINTGDRTIIGRIASLASGVGSEKTPIAIEIEHFVHIVAGVAVSIDIIFFITAVCMKYYVLDAIIFLISIIVANVPEGLLATVTVTLSLTAKRMAKKNCLVKNLEAVETLGSTSIICSDKTGTLTQNRMTVAHLWFDNQIFVADTSENQTKQAFDQSSGTWASLSKIITLCNRAEFRPGQESVPIMKRTVVGDASETALLKFSEVILGDVMGIRKRNHKVAEIPFNSTNKFQLSIHETEDPNNKRFLVVMKGAPERILEKCSTIMINGQEQPLDKSSADSFHTAYMELGGLGERVLGFCHLYLPAEQFPQSYIFDVDSVNFPTSNFCFVGLLSMIDPPRSTVPDAVSKCRSAGIKVIMVTGDHPITAKAIAKSVGIISANNETVEDIAKRRNIAVEQVNKREAKAAVVTGMELKDMTPEQLDELLTNYQEIVFARTSPQQKLIIVEGCQRQDAIVAVTGDGVNDSPALKKADIGIAMGIAGSDAAKNAADMVLLDDNFASIVTGVEEGRLIFDNLKKTIAYTLTKNIAELCPFLIYIVAGLPLPIGTITILFIDLGTDIIPSIALAYEKAESDIMNRKPRHKKKDRLVNTQLAIYSYLHIGLMQALGGFLVYFTVYAQQGFWPTSLINLRVAWETDDINDLEDSYGQEWTRYQRKYLEWTGSTAFFVAIMIQQIADLIIRKTRRNSIFQQGLFRNKVIWVGIASQVIVALILSYGLGSVPALSFTMLRVQYWFVAVPHAILIWVYDEMRKLFIRLYPGSWWDKNMYY.

The disordered stretch occupies residues 1-50 (MRRKTEIYSVELNGTKDVKPADQRDDKKFKGAKNKDLEPNKSHEKEELKK). Over 1-99 (MRRKTEIYSV…PNTLTPPKQT (99 aa)) the chain is Cytoplasmic. Positions 14–50 (GTKDVKPADQRDDKKFKGAKNKDLEPNKSHEKEELKK) are enriched in basic and acidic residues. Residues 100–120 (PEIIKFLKQMVGGFSILLWIG) traverse the membrane as a helical segment. The Lumenal segment spans residues 121–143 (AALCWIAFVIQYVNNSASLDNVY). The helical transmembrane segment at 144–164 (LGAILVLVVILTGIFAYYQEA) threads the bilayer. The Cytoplasmic portion of the chain corresponds to 165–300 (KSTNIMASFS…SEKTPIAIEI (136 aa)). Residues 301–320 (EHFVHIVAGVAVSIDIIFFI) traverse the membrane as a helical segment. Topologically, residues 321 to 332 (TAVCMKYYVLDA) are lumenal. The helical transmembrane segment at 333–350 (IIFLISIIVANVPEGLLA) threads the bilayer. Residues 351 to 784 (TVTVTLSLTA…EEGRLIFDNL (434 aa)) lie on the Cytoplasmic side of the membrane. Asp388 acts as the 4-aspartylphosphate intermediate in catalysis. Residues Asp729 and Asp733 each contribute to the Mg(2+) site. Residues 785 to 804 (KKTIAYTLTKNIAELCPFLI) traverse the membrane as a helical segment. Residues 805-814 (YIVAGLPLPI) lie on the Lumenal side of the membrane. The chain crosses the membrane as a helical span at residues 815-835 (GTITILFIDLGTDIIPSIALA). Topologically, residues 836 to 855 (YEKAESDIMNRKPRHKKKDR) are cytoplasmic. A helical membrane pass occupies residues 856-878 (LVNTQLAIYSYLHIGLMQALGGF). At 879–930 (LVYFTVYAQQGFWPTSLINLRVAWETDDINDLEDSYGQEWTRYQRKYLEWTG) the chain is on the lumenal side. The helical transmembrane segment at 931 to 950 (STAFFVAIMIQQIADLIIRK) threads the bilayer. At 951-964 (TRRNSIFQQGLFRN) the chain is on the cytoplasmic side. At Ser955 the chain carries Phosphoserine; by PKA. Residues 965 to 983 (KVIWVGIASQVIVALILSY) traverse the membrane as a helical segment. The Lumenal segment spans residues 984 to 998 (GLGSVPALSFTMLRV). The helical transmembrane segment at 999 to 1019 (QYWFVAVPHAILIWVYDEMRK) threads the bilayer. At 1020–1036 (LFIRLYPGSWWDKNMYY) the chain is on the cytoplasmic side.

It belongs to the cation transport ATPase (P-type) (TC 3.A.3) family. Type IIC subfamily. The ATPase pump is composed of a catalytic alpha subunit and an auxiliary non-catalytic beta subunit. The alpha subunit pairs with the beta subunit of gastric H(+)/K(+) ATPase ATP4B or the beta subunit of Na(+)/K(+) ATPases ATP1B1 and ATP1B3; this interaction is required for the formation of a functionally active pump and its targeting at the plasma membrane. In terms of tissue distribution, expressed at high levels in distal colon, coagulating and preputial glands; at much lower levels in proximal colon, kidney, uterus, brain, placenta and lung; and at trace levels in heart and forestomach. Expressed in distal colon epithelium (at protein level). Expressed in anterior prostate (at protein level).

It localises to the apical cell membrane. The catalysed reaction is K(+)(out) + ATP + H2O + H(+)(in) = K(+)(in) + ADP + phosphate + 2 H(+)(out). It catalyses the reaction K(+)(out) + Na(+)(in) + ATP + H2O = K(+)(in) + Na(+)(out) + ADP + phosphate + H(+). With respect to regulation, up-regulated by K(+) ions in a dose-dependent way. Functionally, the catalytic subunit of a H(+)/K(+) ATPase and/or Na(+)/K(+) ATPase pump which transports K(+) ions in exchange for Na(+) and/or H(+) ions across the apical membrane of epithelial cells. Uses ATP as an energy source to pump K(+) ions into the cell while transporting Na(+) and/or H(+) ions to the extracellular compartment. Involved in the maintenance of electrolyte homeostasis through K(+) ion absorption in kidney and colon. In the airway epithelium, may play a primary role in mucus acidification regulating its viscosity and clearance. This Rattus norvegicus (Rat) protein is Potassium-transporting ATPase alpha chain 2 (Atp12a).